The primary structure comprises 122 residues: Ribosome-binding factor A (122 aa).

Positions 95–111 (PTVERVTRIQRTLREVS) are enriched in basic and acidic residues. A disordered region spans residues 95-122 (PTVERVTRIQRTLREVSGEDGDGNGTQE).

Belongs to the RbfA family. In terms of assembly, monomer. Binds 30S ribosomal subunits, but not 50S ribosomal subunits or 70S ribosomes.

It localises to the cytoplasm. In terms of biological role, one of several proteins that assist in the late maturation steps of the functional core of the 30S ribosomal subunit. Associates with free 30S ribosomal subunits (but not with 30S subunits that are part of 70S ribosomes or polysomes). Required for efficient processing of 16S rRNA. May interact with the 5'-terminal helix region of 16S rRNA. The protein is Ribosome-binding factor A of Rubrobacter xylanophilus (strain DSM 9941 / JCM 11954 / NBRC 16129 / PRD-1).